The primary structure comprises 186 residues: Dynactin subunit 3 (186 aa).

A2 bears the N-acetylalanine mark.

Belongs to the dynactin subunit 3 family. In terms of assembly, subunit of dynactin, a multiprotein complex part of a tripartite complex with dynein and a adapter, such as BICDL1, BICD2 or HOOK3. The dynactin complex is built around ACTR1A/ACTB filament and consists of an actin-related filament composed of a shoulder domain, a pointed end and a barbed end. Its length is defined by its flexible shoulder domain. The soulder is composed of 2 DCTN1 subunits, 4 DCTN2 and 2 DCTN3. The 4 DCNT2 (via N-terminus) bind the ACTR1A filament and act as molecular rulers to determine the length. The pointed end is important for binding dynein-dynactin cargo adapters. Consists of 4 subunits: ACTR10, DCNT4, DCTN5 and DCTN6. The barbed end is composed of a CAPZA1:CAPZB heterodimers, which binds ACTR1A/ACTB filament and dynactin and stabilizes dynactin.

It localises to the cytoplasm. The protein localises to the cytoskeleton. The protein resides in the microtubule organizing center. Its subcellular location is the centrosome. It is found in the chromosome. It localises to the centromere. The protein localises to the kinetochore. The protein resides in the spindle. Its subcellular location is the cleavage furrow. It is found in the midbody. Functionally, part of the dynactin complex that activates the molecular motor dynein for ultra-processive transport along microtubules. Together with dynein is involved in spindle assembly and cytokinesis. This chain is Dynactin subunit 3, found in Sus scrofa (Pig).